A 54-amino-acid polypeptide reads, in one-letter code: Preprotein translocase subunit SecG (54 aa).

Residues 1–31 (MSSGSNSGGLMSSAGLVRYFDSEDRDAIAID) lie on the Cytoplasmic side of the membrane. A helical transmembrane segment spans residues 32–53 (PKTVLAFCVLFGVFVQILSLTV). Ala54 is a topological domain (extracellular).

The protein belongs to the SEC61-beta family. As to quaternary structure, component of the protein translocase complex. Heterotrimer consisting of alpha (SecY), beta (SecG) and gamma (SecE) subunits. Can form oligomers of the heterotrimer.

It is found in the cell membrane. Its function is as follows. Involved in protein export. The function of the beta subunit is unknown, but it may be involved in stabilization of the trimeric complex. The polypeptide is Preprotein translocase subunit SecG (Halorubrum lacusprofundi (strain ATCC 49239 / DSM 5036 / JCM 8891 / ACAM 34)).